The following is a 264-amino-acid chain: Zearalenone hydrolase (264 aa).

The 181-residue stretch at 27 to 207 (VLVPDGLGEC…KDLEALRGKP (181 aa)) folds into the AB hydrolase-1 domain. Positions 32, 102, and 103 each coordinate zearalenone. The active site involves serine 102. The active site involves glutamate 126. Positions 183, 187, 220, and 242 each coordinate zearalenone. Residue histidine 242 is part of the active site.

Belongs to the AB hydrolase superfamily. Hydrolase RutD family. As to quaternary structure, homodimer.

The enzyme catalyses zearalenone + H2O = hydrolyzed zearalenone + H(+). In terms of biological role, lactonohydrolase that specifically hydrolyzes and deactivates the mycotoxin zearalenone (ZEN) and its zearalenol (ZOL) derivatives. ZHD101 prefers ZEN to ZOL as its substrate, but ZOL, especially the alpha-form, shows higher estrogenic toxicity than ZEN. The polypeptide is Zearalenone hydrolase (Bionectria ochroleuca (Gliocladium roseum)).